The following is a 498-amino-acid chain: Glycylpeptide N-tetradecanoyltransferase 2 (498 aa).

Residues 1–88 (MAEDSESAAS…QPSKNPSVPM (88 aa)) are disordered. Residues 15-32 (ELDDQDTCGIDGDNEEET) show a composition bias toward acidic residues. Ser-38 is subject to Phosphoserine. Basic residues predominate over residues 45–57 (AKKKKKKQKRKKE). Polar residues predominate over residues 61 to 86 (SGGTKSDSASDSQEIKIQQPSKNPSV). Positions 117, 122, 250, 252, 258, 260, 261, and 262 each coordinate tetradecanoyl-CoA.

This sequence belongs to the NMT family.

Its subcellular location is the cytoplasm. The protein localises to the membrane. The enzyme catalyses N-terminal glycyl-[protein] + tetradecanoyl-CoA = N-tetradecanoylglycyl-[protein] + CoA + H(+). The catalysed reaction is N-terminal glycyl-L-lysyl-[protein] + tetradecanoyl-CoA = N-terminal glycyl-(N(6)-tetradecanoyl)-L-lysyl-[protein] + CoA + H(+). Functionally, adds a myristoyl group to the N-terminal glycine residue of certain cellular and viral proteins. Also able to mediate N-terminal lysine myristoylation of proteins: catalyzes myristoylation of ARF6 on both 'Gly-2' and 'Lys-3'. Lysine myristoylation is required to maintain ARF6 on membranes during the GTPase cycle. The polypeptide is Glycylpeptide N-tetradecanoyltransferase 2 (Homo sapiens (Human)).